The sequence spans 202 residues: MNLLRKIVKNRRDEDTQKSSPASAPLDDDDLWLPPPEYVPLKELTGKKNMRNFCINGRVKVCSPNGYSFRILRHILKSFDEIYSGNHRMIGLVKVVIGLALSGSPVPEGLNWVYKLRRTFIFQWADSRGPLEGEELEYSQEITWDDDTEFVGLQIRVIAKQCHIQGRVWCINMNPRACQLWSDMSLQTQRSEEDKDSSLLLE.

The disordered stretch occupies residues 9 to 31; sequence KNRRDEDTQKSSPASAPLDDDDL. Residues 35–38 carry the PPXY motif motif; the sequence is PPEY. An essential for glycoprotein binding region spans residues 115 to 151; sequence KLRRTFIFQWADSRGPLEGEELEYSQEITWDDDTEFV.

This sequence belongs to the lyssavirus matrix protein family. In terms of assembly, homomultimer. Interacts with nucleoprotein and with the cytoplasmic domain of glycoprotein. Interacts with host ATP6V1A; this interaction plays an important role in virion uncoating after viral entry.

Its subcellular location is the virion membrane. The protein localises to the host endomembrane system. The protein resides in the host cytoplasm. Its function is as follows. Plays a major role in assembly, budding and uncoating of virion after membrane fusion. Completely covers the ribonucleoprotein coil and keep it in condensed bullet-shaped form. Inhibits viral transcription and stimulates replication. Plays a major role in early induction of TRAIL-mediated apoptosis in infected neurons. Inhibits the integrated stress response (ISR) in the infected cell by blocking the formation of stress granules. The protein is Matrix protein (M) of Rabies virus (strain SAD B19) (RABV).